The following is a 152-amino-acid chain: 6,7-dimethyl-8-ribityllumazine synthase (152 aa).

Residues phenylalanine 22, 56–58 (AFE), and 79–81 (AVI) each bind 5-amino-6-(D-ribitylamino)uracil. A (2S)-2-hydroxy-3-oxobutyl phosphate-binding site is contributed by 84 to 85 (AT). Catalysis depends on histidine 87, which acts as the Proton donor. Phenylalanine 112 is a binding site for 5-amino-6-(D-ribitylamino)uracil. Arginine 126 contributes to the (2S)-2-hydroxy-3-oxobutyl phosphate binding site.

It belongs to the DMRL synthase family.

The enzyme catalyses (2S)-2-hydroxy-3-oxobutyl phosphate + 5-amino-6-(D-ribitylamino)uracil = 6,7-dimethyl-8-(1-D-ribityl)lumazine + phosphate + 2 H2O + H(+). It participates in cofactor biosynthesis; riboflavin biosynthesis; riboflavin from 2-hydroxy-3-oxobutyl phosphate and 5-amino-6-(D-ribitylamino)uracil: step 1/2. Functionally, catalyzes the formation of 6,7-dimethyl-8-ribityllumazine by condensation of 5-amino-6-(D-ribitylamino)uracil with 3,4-dihydroxy-2-butanone 4-phosphate. This is the penultimate step in the biosynthesis of riboflavin. The polypeptide is 6,7-dimethyl-8-ribityllumazine synthase (Carboxydothermus hydrogenoformans (strain ATCC BAA-161 / DSM 6008 / Z-2901)).